The chain runs to 130 residues: Small ribosomal subunit protein uS9 (130 aa).

Residues 105 to 115 are compositionally biased toward basic and acidic residues; the sequence is TRDSRQVERKK. The segment at 105–130 is disordered; that stretch reads TRDSRQVERKKVGFRKSRKRTQFSKR. A compositionally biased stretch (basic residues) spans 116-130; it reads VGFRKSRKRTQFSKR.

The protein belongs to the universal ribosomal protein uS9 family.

This Buchnera aphidicola subsp. Schizaphis graminum (strain Sg) protein is Small ribosomal subunit protein uS9.